Reading from the N-terminus, the 896-residue chain is Probable DNA-directed RNA polymerase (896 aa).

Residues aspartate 546, lysine 617, and aspartate 798 contribute to the active site.

It belongs to the phage and mitochondrial RNA polymerase family.

Its subcellular location is the mitochondrion. It carries out the reaction RNA(n) + a ribonucleoside 5'-triphosphate = RNA(n+1) + diphosphate. Its function is as follows. DNA-dependent RNA polymerase catalyzes the transcription of DNA into RNA using the four ribonucleoside triphosphates as substrates. This chain is Probable DNA-directed RNA polymerase, found in Neurospora crassa.